A 411-amino-acid chain; its full sequence is Serine hydroxymethyltransferase (411 aa).

Residues L117 and 121 to 123 (GHL) each bind (6S)-5,6,7,8-tetrahydrofolate. The residue at position 226 (K226) is an N6-(pyridoxal phosphate)lysine. (6S)-5,6,7,8-tetrahydrofolate is bound by residues E241 and 349-351 (SPF).

Belongs to the SHMT family. Homodimer. The cofactor is pyridoxal 5'-phosphate.

The protein resides in the cytoplasm. The enzyme catalyses (6R)-5,10-methylene-5,6,7,8-tetrahydrofolate + glycine + H2O = (6S)-5,6,7,8-tetrahydrofolate + L-serine. It participates in one-carbon metabolism; tetrahydrofolate interconversion. The protein operates within amino-acid biosynthesis; glycine biosynthesis; glycine from L-serine: step 1/1. In terms of biological role, catalyzes the reversible interconversion of serine and glycine with tetrahydrofolate (THF) serving as the one-carbon carrier. This reaction serves as the major source of one-carbon groups required for the biosynthesis of purines, thymidylate, methionine, and other important biomolecules. Also exhibits THF-independent aldolase activity toward beta-hydroxyamino acids, producing glycine and aldehydes, via a retro-aldol mechanism. The chain is Serine hydroxymethyltransferase from Oceanobacillus iheyensis (strain DSM 14371 / CIP 107618 / JCM 11309 / KCTC 3954 / HTE831).